The chain runs to 336 residues: Isopentenyl-diphosphate delta-isomerase (336 aa).

Position 5–6 (5–6 (RK)) interacts with substrate. FMN is bound by residues 60-62 (AMT), Ser-90, and Asn-117. Substrate is bound at residue Gln-147. Glu-148 is a Mg(2+) binding site. FMN-binding positions include Lys-179, Ser-204, Thr-209, 253–255 (GVR), and 274–275 (SR).

This sequence belongs to the IPP isomerase type 2 family. In terms of assembly, homooctamer. Dimer of tetramers. Requires FMN as cofactor. NADPH is required as a cofactor. It depends on Mg(2+) as a cofactor.

It is found in the cytoplasm. It catalyses the reaction isopentenyl diphosphate = dimethylallyl diphosphate. Its function is as follows. Involved in the biosynthesis of isoprenoids. Catalyzes the 1,3-allylic rearrangement of the homoallylic substrate isopentenyl (IPP) to its allylic isomer, dimethylallyl diphosphate (DMAPP). In Streptococcus pneumoniae (strain 70585), this protein is Isopentenyl-diphosphate delta-isomerase.